We begin with the raw amino-acid sequence, 248 residues long: Large ribosomal subunit protein bL9m (248 aa).

Residues 1–25 constitute a mitochondrion transit peptide; sequence MLKNIYVTPLNLLKSATSLQQQVRT.

This sequence belongs to the bacterial ribosomal protein bL9 family. In terms of assembly, component of the mitochondrial ribosome large subunit (39S) which comprises a 16S rRNA and about 50 distinct proteins.

Its subcellular location is the mitochondrion. The polypeptide is Large ribosomal subunit protein bL9m (mRpL9) (Drosophila melanogaster (Fruit fly)).